The sequence spans 288 residues: ATP synthase gamma chain (288 aa).

Belongs to the ATPase gamma chain family. As to quaternary structure, F-type ATPases have 2 components, CF(1) - the catalytic core - and CF(0) - the membrane proton channel. CF(1) has five subunits: alpha(3), beta(3), gamma(1), delta(1), epsilon(1). CF(0) has three main subunits: a, b and c.

The protein localises to the cell membrane. Produces ATP from ADP in the presence of a proton gradient across the membrane. The gamma chain is believed to be important in regulating ATPase activity and the flow of protons through the CF(0) complex. In Bacillus pumilus (strain SAFR-032), this protein is ATP synthase gamma chain.